A 267-amino-acid polypeptide reads, in one-letter code: Cell cycle checkpoint protein RAD1 homolog mrt-2 (267 aa).

The protein belongs to the Rad1 family. In terms of assembly, probable component of the toroidal 9-1-1 (RAD9-RAD1-HUS1) complex, composed of hpr-9, mrt-2 and hus-1. Interacts with hus-1. Might associate with hpr-9.

Its subcellular location is the nucleus. The enzyme catalyses Exonucleolytic cleavage in the 3'- to 5'-direction to yield nucleoside 5'-phosphates.. Its function is as follows. May be a component of the 9-1-1 cell-cycle checkpoint response complex that plays a major role in DNA repair. Promotes DNA double strand break-induced cell cycle arrest and apoptosis, thereby playing a role in genome stability. Also required for telomere length maintenance and germline immortality. May possess 3'-&gt;5' double stranded DNA exonuclease activity. The polypeptide is Cell cycle checkpoint protein RAD1 homolog mrt-2 (Caenorhabditis elegans).